Consider the following 220-residue polypeptide: UPF0319 protein YccT (220 aa).

The N-terminal stretch at 1–20 (MKTGIVTTLIALCLPVSVFA) is a signal peptide.

Belongs to the UPF0319 family.

The sequence is that of UPF0319 protein YccT from Shigella flexneri serotype 5b (strain 8401).